Here is a 120-residue protein sequence, read N- to C-terminus: MASRKEALARRANRVRRHIKSVANGRPRLSVHRSSKNIYAQIIDDVAGKTLASASTLDKDLRGSLKTGADTAAAAAVGKLVAERASKAGVTDVVFDRGAFIYHGRIKALAEAAREGGLTF.

This sequence belongs to the universal ribosomal protein uL18 family. As to quaternary structure, part of the 50S ribosomal subunit; part of the 5S rRNA/L5/L18/L25 subcomplex. Contacts the 5S and 23S rRNAs.

In terms of biological role, this is one of the proteins that bind and probably mediate the attachment of the 5S RNA into the large ribosomal subunit, where it forms part of the central protuberance. This chain is Large ribosomal subunit protein uL18, found in Rhizobium etli (strain ATCC 51251 / DSM 11541 / JCM 21823 / NBRC 15573 / CFN 42).